Consider the following 104-residue polypeptide: Putative protein 22K (104 aa).

Residues 35–104 form a disordered region; it reads YKQLEKELGE…KAPAAKAPSK (70 aa). The segment covering 60 to 78 has biased composition (acidic residues); it reads PLSEGELEEISEEEEEEGE. The segment covering 94–104 has biased composition (low complexity); it reads SKAPAAKAPSK.

The polypeptide is Putative protein 22K (Snake adenovirus serotype 1 (SnAdV-1)).